The chain runs to 371 residues: Flagellar P-ring protein (371 aa).

Positions 1–25 (MKMRACKWLLTLAVAFAATLSSAYA) are cleaved as a signal peptide.

This sequence belongs to the FlgI family. In terms of assembly, the basal body constitutes a major portion of the flagellar organelle and consists of four rings (L,P,S, and M) mounted on a central rod.

The protein localises to the periplasm. The protein resides in the bacterial flagellum basal body. Functionally, assembles around the rod to form the L-ring and probably protects the motor/basal body from shearing forces during rotation. The chain is Flagellar P-ring protein from Sinorhizobium medicae (strain WSM419) (Ensifer medicae).